The sequence spans 232 residues: Ribose-5-phosphate isomerase A (232 aa).

Residues 29-32 (TGST), 84-87 (DGAD), and 97-100 (KGGG) each bind substrate. The active-site Proton acceptor is the E106. K124 is a substrate binding site.

The protein belongs to the ribose 5-phosphate isomerase family. As to quaternary structure, homodimer.

The catalysed reaction is aldehydo-D-ribose 5-phosphate = D-ribulose 5-phosphate. It functions in the pathway carbohydrate degradation; pentose phosphate pathway; D-ribose 5-phosphate from D-ribulose 5-phosphate (non-oxidative stage): step 1/1. Functionally, catalyzes the reversible conversion of ribose-5-phosphate to ribulose 5-phosphate. The protein is Ribose-5-phosphate isomerase A of Brucella suis biovar 1 (strain 1330).